A 321-amino-acid chain; its full sequence is Glucokinase (321 aa).

ATP is bound at residue 8–13 (GDVGGT).

It belongs to the bacterial glucokinase family.

The protein resides in the cytoplasm. It carries out the reaction D-glucose + ATP = D-glucose 6-phosphate + ADP + H(+). The chain is Glucokinase from Salmonella typhi.